Here is a 171-residue protein sequence, read N- to C-terminus: Cyclin-dependent kinase inhibitor 2A (171 aa).

Basic and acidic residues predominate over residues 33-42 (ASMHTKHESE). The interval 33–52 (ASMHTKHESEESFSGEKLTE) is disordered. ANK repeat units lie at residues 45–74 (FSGEKLTEAAARGRTEVVTELLELGTNPNA), 78–106 (FGRSAIQVMMMGNVRLAAILLQYGAEPNT), and 111–140 (TLTLPVHDAAREGFLDTLMLLHRAGARLDV).

Belongs to the CDKN2 cyclin-dependent kinase inhibitor family. Heterodimer with CDK4 or CDK6. Predominamt P16 complexes contained CDK6. Interacts with CDK4 (both 'T-172'-phosphorylated and non-phosphorylated forms); the interaction inhibits cyclin D-CDK4 kinase activity. Interacts with ISCO2. Expressed predominantly in lung and testis. In the testis, restricted to germ cells in the seminiferous epithelium. Not detected in premeiotic spermatogonia but high levels found in postmeiotic spermatids. In primary tumors, low levels detected in melanocytic hyperplasias. Higher levels found in non-metastatic and metastatic melanomas.

Its subcellular location is the cytoplasm. The protein localises to the nucleus. Functionally, acts as a negative regulator of the proliferation of normal cells by interacting strongly with CDK4 and CDK6. This inhibits their ability to interact with cyclins D and to phosphorylate the retinoblastoma protein. In Monodelphis domestica (Gray short-tailed opossum), this protein is Cyclin-dependent kinase inhibitor 2A.